A 99-amino-acid chain; its full sequence is Aspartyl/glutamyl-tRNA(Asn/Gln) amidotransferase subunit C (99 aa).

It belongs to the GatC family. In terms of assembly, heterotrimer of A, B and C subunits.

It catalyses the reaction L-glutamyl-tRNA(Gln) + L-glutamine + ATP + H2O = L-glutaminyl-tRNA(Gln) + L-glutamate + ADP + phosphate + H(+). The enzyme catalyses L-aspartyl-tRNA(Asn) + L-glutamine + ATP + H2O = L-asparaginyl-tRNA(Asn) + L-glutamate + ADP + phosphate + 2 H(+). Functionally, allows the formation of correctly charged Asn-tRNA(Asn) or Gln-tRNA(Gln) through the transamidation of misacylated Asp-tRNA(Asn) or Glu-tRNA(Gln) in organisms which lack either or both of asparaginyl-tRNA or glutaminyl-tRNA synthetases. The reaction takes place in the presence of glutamine and ATP through an activated phospho-Asp-tRNA(Asn) or phospho-Glu-tRNA(Gln). This Burkholderia lata (strain ATCC 17760 / DSM 23089 / LMG 22485 / NCIMB 9086 / R18194 / 383) protein is Aspartyl/glutamyl-tRNA(Asn/Gln) amidotransferase subunit C.